Here is a 272-residue protein sequence, read N- to C-terminus: Expansin-B16 (272 aa).

An N-terminal signal peptide occupies residues 1–25 (MAAFSSSSSAPMLIRSVLFVSLLSA). The Expansin-like EG45 domain occupies 63-173 (GGACGYGTLV…RRTACKYGGK (111 aa)). 3 disulfides stabilise this stretch: C66–C95, C98–C168, and C103–C109. Residues 186-267 (FWLSLLVEFE…NWTPKATYTS (82 aa)) form the Expansin-like CBD domain.

The protein belongs to the expansin family. Expansin B subfamily.

Its subcellular location is the secreted. It is found in the cell wall. The protein resides in the membrane. In terms of biological role, may cause loosening and extension of plant cell walls by disrupting non-covalent bonding between cellulose microfibrils and matrix glucans. No enzymatic activity has been found. May be required for rapid internodal elongation in deepwater rice during submergence. The protein is Expansin-B16 (EXPB16) of Oryza sativa subsp. japonica (Rice).